The following is an 86-amino-acid chain: Cell division topological specificity factor (86 aa).

Belongs to the MinE family.

In terms of biological role, prevents the cell division inhibition by proteins MinC and MinD at internal division sites while permitting inhibition at polar sites. This ensures cell division at the proper site by restricting the formation of a division septum at the midpoint of the long axis of the cell. This chain is Cell division topological specificity factor, found in Shewanella pealeana (strain ATCC 700345 / ANG-SQ1).